The sequence spans 860 residues: Leucine--tRNA ligase (860 aa).

The 'HIGH' region signature appears at 42–52 (PYPSGRLHMGH). The 'KMSKS' region signature appears at 619 to 623 (KMSKS). An ATP-binding site is contributed by K622.

This sequence belongs to the class-I aminoacyl-tRNA synthetase family.

Its subcellular location is the cytoplasm. The catalysed reaction is tRNA(Leu) + L-leucine + ATP = L-leucyl-tRNA(Leu) + AMP + diphosphate. The sequence is that of Leucine--tRNA ligase from Escherichia coli (strain SE11).